The following is a 767-amino-acid chain: AMP deaminase 3 (767 aa).

Ser-85 and Ser-107 each carry phosphoserine. Disordered stretches follow at residues 89 to 111 and 181 to 205; these read QMPP…PTTP and LGHP…PLPQ. Zn(2+) contacts are provided by His-317 and His-319. Residues His-319 and 388–393 each bind substrate; that span reads KFNSKY. His-586 contributes to the Zn(2+) binding site. Residue Glu-589 coordinates substrate. His-608 functions as the Proton acceptor in the catalytic mechanism. A Zn(2+)-binding site is contributed by Asp-663. 664-667 contributes to the substrate binding site; the sequence is DPMQ.

The protein belongs to the metallo-dependent hydrolases superfamily. Adenosine and AMP deaminases family. As to quaternary structure, homotetramer. Zn(2+) is required as a cofactor.

It carries out the reaction AMP + H2O + H(+) = IMP + NH4(+). The protein operates within purine metabolism; IMP biosynthesis via salvage pathway; IMP from AMP: step 1/1. In terms of biological role, AMP deaminase plays a critical role in energy metabolism. The polypeptide is AMP deaminase 3 (Homo sapiens (Human)).